The chain runs to 96 residues: Prokineticin Bm8-b (96 aa).

Residues 1–19 form the signal peptide; it reads MKCFAQIVVLLLVIAFSHG. 4 cysteine pairs are disulfide-bonded: Cys-32–Cys-50, Cys-37–Cys-78, Cys-60–Cys-86, and Cys-80–Cys-95.

The protein belongs to the AVIT (prokineticin) family. In terms of tissue distribution, expressed by the skin glands.

The protein resides in the secreted. Functionally, potent agonist for both PKR1/PROKR1 and PKR2/PROKR2, and inducer of a potent and long-lasting hyperalgesia. Also potentiates capsaicin-induced TRPV1 current, when tested on DRG neurons. At subnanomolar concentrations, this protein both induces potent chemotaxis of macrophages and stimulates LPS-induced production of the pro-inflammatory cytokines IL-1 and IL-12. In vivo, potently stimulates the contraction of the guinea-pig gastrointestinal (GI) smooth muscle (nanomolar concentration). This chain is Prokineticin Bm8-b, found in Bombina maxima (Giant fire-bellied toad).